Reading from the N-terminus, the 416-residue chain is MNRQSWLLNLSLLKTHPAFRAVFLARFISIVSLGLLGVAVPVQIQMMTHSTWQVGLSVTLTGSAMFVGLMVGGVLADRYERKKVILLARGTCGIGFIGLCLNALLPEPSLLAIYLLGLWDGFFASLGVTALLAATPALVGRENLMQAGAITMLTVRLGSVISPMLGGVLLATGGVAWNYGLAAAGTFITLLPLLSLPALPPPPQPREHPLKSLLAAFRFLLSSPLIGGIALLGGLLTMASAVRVLYPALAINWHMSAAQIGLLYAAIPLGAAVGALTSGQLAHSVRPGLLMLVSTVGSFLAIGVFGLMPVWLLGVICLALFGWLSAISSLLQYTLLQTQTPEAMLGRINGLWTAQNVTGDAIGAALLGGLGAMMTPVASASVSGFGLVIVGLLLMLLLGELRRFRQPPPVPDGAPL.

Residues 1 to 21 lie on the Cytoplasmic side of the membrane; sequence MNRQSWLLNLSLLKTHPAFRA. The chain crosses the membrane as a helical span at residues 22–42; it reads VFLARFISIVSLGLLGVAVPV. Residues 43–55 lie on the Periplasmic side of the membrane; the sequence is QIQMMTHSTWQVG. A helical membrane pass occupies residues 56–76; the sequence is LSVTLTGSAMFVGLMVGGVLA. Residues 77 to 83 are Cytoplasmic-facing; that stretch reads DRYERKK. Residues 84–104 traverse the membrane as a helical segment; the sequence is VILLARGTCGIGFIGLCLNAL. At 105-109 the chain is on the periplasmic side; the sequence is LPEPS. The helical transmembrane segment at 110–130 threads the bilayer; it reads LLAIYLLGLWDGFFASLGVTA. Residues 131-156 are Cytoplasmic-facing; the sequence is LLAATPALVGRENLMQAGAITMLTVR. The chain crosses the membrane as a helical span at residues 157–177; sequence LGSVISPMLGGVLLATGGVAW. A topological domain (periplasmic) is located at residue Asn178. Residues 179–199 form a helical membrane-spanning segment; sequence YGLAAAGTFITLLPLLSLPAL. At 200 to 218 the chain is on the cytoplasmic side; sequence PPPPQPREHPLKSLLAAFR. A helical membrane pass occupies residues 219-239; it reads FLLSSPLIGGIALLGGLLTMA. The Periplasmic portion of the chain corresponds to 240–256; sequence SAVRVLYPALAINWHMS. Residues 257–277 form a helical membrane-spanning segment; the sequence is AAQIGLLYAAIPLGAAVGALT. Over 278–287 the chain is Cytoplasmic; it reads SGQLAHSVRP. A helical transmembrane segment spans residues 288-307; sequence GLLMLVSTVGSFLAIGVFGL. Residues 308 to 313 are Periplasmic-facing; the sequence is MPVWLL. A helical transmembrane segment spans residues 314-336; sequence GVICLALFGWLSAISSLLQYTLL. Residues 337 to 356 are Cytoplasmic-facing; the sequence is QTQTPEAMLGRINGLWTAQN. The helical transmembrane segment at 357 to 377 threads the bilayer; that stretch reads VTGDAIGAALLGGLGAMMTPV. A topological domain (periplasmic) is located at residue Ala378. Residues 379 to 399 form a helical membrane-spanning segment; sequence SASVSGFGLVIVGLLLMLLLG. The Cytoplasmic portion of the chain corresponds to 400–416; sequence ELRRFRQPPPVPDGAPL.

Belongs to the major facilitator superfamily. EntS (TC 2.A.1.38) family.

The protein resides in the cell inner membrane. Its function is as follows. Component of an export pathway for enterobactin. The polypeptide is Enterobactin exporter EntS (Citrobacter koseri (strain ATCC BAA-895 / CDC 4225-83 / SGSC4696)).